The primary structure comprises 270 residues: Glutamate racemase (270 aa).

Residues 7 to 8 (DS) and 39 to 40 (YG) contribute to the substrate site. Cys-70 acts as the Proton donor/acceptor in catalysis. 71–72 (NT) contributes to the substrate binding site. Cys-194 (proton donor/acceptor) is an active-site residue. 195–196 (TH) contacts substrate.

The protein belongs to the aspartate/glutamate racemases family.

It carries out the reaction L-glutamate = D-glutamate. The protein operates within cell wall biogenesis; peptidoglycan biosynthesis. Provides the (R)-glutamate required for cell wall biosynthesis. This is Glutamate racemase from Paracoccus denitrificans (strain Pd 1222).